A 240-amino-acid chain; its full sequence is MSVKGVEMPEMTWDLDVGNKWRRRKVLSRIHRFWECRLRVWWLSDAGVRETDPPRPRRRPTWMTAVFHVICAVLLTLMIMAIGALIAYLRYYHQDSWRDMLHDLFCGCHYPEKCRRHHERQRSRRRAMDVPDPELGDPARRPLNGAMYYGSGCRFDTVEMVDETRPAPPALSSPETGDDSNDDAVAGGGAGGVTSSATRTTSSNALLPEWMDAVHVAVQAAVQATVQVSGPRENAVSPAT.

The helical transmembrane segment at 69 to 89 (VICAVLLTLMIMAIGALIAYL) threads the bilayer. Disordered regions lie at residues 119-143 (ERQR…RRPL) and 164-200 (TRPA…ATRT).

This sequence belongs to the HHV-5 UL136 protein family. In terms of assembly, interacts with host ATP1B1.

The protein resides in the host membrane. The chain is Protein UL136 (UL136) from Human cytomegalovirus (strain Merlin) (HHV-5).